The sequence spans 215 residues: uncharacterized protein (215 aa).

This sequence to T.pallidum TP_0127, TP_0618 and TP_0619.

This is an uncharacterized protein from Treponema pallidum (strain Nichols).